The chain runs to 427 residues: Inward rectifier potassium channel 2 (427 aa).

Over M1–W81 the chain is Cytoplasmic. A helical transmembrane segment spans residues R82–I106. Residues A107–S128 are Extracellular-facing. Residues F129–Q140 constitute an intramembrane region (helical; Pore-forming). Residues T141–F147 constitute an intramembrane region (pore-forming). The short motif at T142 to F147 is the Selectivity filter element. The Extracellular segment spans residues R148–I156. The chain crosses the membrane as a helical span at residues A157 to A178. The Cytoplasmic portion of the chain corresponds to V179–I427. The polyphosphoinositide (PIP2)-binding stretch occupies residues A181–L208. The interval E386–I427 is disordered. Positions S425–I427 match the PDZ-binding motif.

The protein belongs to the inward rectifier-type potassium channel (TC 1.A.2.1) family. KCNJ2 subfamily. Homotetramer. Homomultimeric and heteromultimeric association with KCNJ4/Kir2.3, resulting in an enhanced G-protein-induced current. Associates, via its PDZ-recognition domain, with a complex containing LIN7A, LIN7B, LIN7C, DLG1, CASK and APBA1. As to expression, found in the apical basilar papilla of the inner ear, brain, muscle, cerebellum, heart and liver.

The protein resides in the cell membrane. It is found in the sarcolemma. Its subcellular location is the T-tubule. It carries out the reaction K(+)(in) = K(+)(out). With respect to regulation, activated by phosphatidylinositol 4,5 biphosphate (PtdIns(4,5)P2). Its function is as follows. Inward rectifier potassium channels are characterized by a greater tendency to allow potassium to flow into the cell rather than out of it. Their voltage dependence is regulated by the concentration of extracellular potassium; as external potassium is raised, the voltage range of the channel opening shifts to more positive voltages. The inward rectification is mainly due to the blockage of outward current by internal magnesium. Can be blocked by external barium. Probably participates in establishing action potential waveform and excitability of neuronal and muscle tissues. The protein is Inward rectifier potassium channel 2 (KCNJ2) of Gallus gallus (Chicken).